Consider the following 885-residue polypeptide: DNA polymerase eta (885 aa).

Residues Val18 to Gly274 form the UmuC domain. Residues Asp22 and Met23 each contribute to the Mg(2+) site. Mn(2+) contacts are provided by Asp22 and Met23. Residue Arg70 participates in a 2'-deoxyribonucleoside 5'-triphosphate binding. Mg(2+)-binding residues include Asp125 and Glu126. Residues Asp125 and Glu126 each coordinate Mn(2+). Residue Glu126 is part of the active site. 2 disordered regions span residues Ala599 to Val653 and Val658 to Asp677. Residues Phe608–Leu618 are compositionally biased toward acidic residues. The span at Glu628–Asn649 shows a compositional bias: polar residues. The segment at Asp701–Thr737 adopts a UBZ3-type 1 zinc-finger fold. Cys708, Cys711, His725, and His729 together coordinate Zn(2+). The disordered stretch occupies residues Leu722–Ile783. Residues Arg739–Gln748 show a composition bias toward basic and acidic residues. The span at Thr766–Ser780 shows a compositional bias: low complexity. The UBZ3-type 2 zinc-finger motif lies at Ser798–Glu832. Zn(2+)-binding residues include Cys805, Cys808, His820, and His824. Residues Asn846–Ser870 are disordered.

The protein belongs to the DNA polymerase type-Y family. As to quaternary structure, interacts (via C-terminus) with nopo. It depends on Mg(2+) as a cofactor. The cofactor is Mn(2+). In terms of processing, ubiquitination enhanced by nopo. Expressed in ovaries and testes.

The protein localises to the nucleus. The catalysed reaction is DNA(n) + a 2'-deoxyribonucleoside 5'-triphosphate = DNA(n+1) + diphosphate. Its activity is regulated as follows. The enzyme in complex with the DNA substrate binds a third divalent metal cation. This binding is essential for catalyzing the DNA synthesis. Its function is as follows. DNA polymerase specifically involved in the DNA repair by translesion synthesis (TLS). Plays an important role in translesion synthesis, where the normal high-fidelity DNA polymerases cannot proceed and DNA synthesis stalls. Inserts one or 2 nucleotide(s) opposite the lesion. During homologous recombination (HR) repair, has a overlapping role with the error-prone translesion polymerase PolZ1/DNApol-zeta to initiate repair synthesis that is completed by end joining or another polymerase that can bind and reinitiate synthesis. Particularly important for the repair of UV-induced pyrimidine dimers and for hydroxyurea (HU)-induced DNA damage. Although inserts the correct base, may cause base transitions and transversions depending upon the context. Forms a Schiff base with 5'-deoxyribose phosphate at abasic sites, but does not have any lyase activity, preventing the release of the 5'-deoxyribose phosphate (5'-dRP) residue. This covalent trapping of the enzyme by the 5'-dRP residue inhibits its DNA synthetic activity during base excision repair, thereby avoiding high incidence of mutagenesis. This chain is DNA polymerase eta, found in Drosophila melanogaster (Fruit fly).